A 244-amino-acid chain; its full sequence is Protein TIFY 10b (244 aa).

The region spanning glutamine 97–lysine 132 is the Tify domain. Residues glutamine 174–glutamine 244 are disordered. The Jas signature appears at proline 185 to glutamine 210. The short motif at alanine 187–arginine 194 is the Nuclear localization signal element. A compositionally biased stretch (basic and acidic residues) spans arginine 194–asparagine 204.

It belongs to the TIFY/JAZ family. Interacts with BHLH148. Interacts with COI1A and COI1B in a coronatine-dependent manner. Coronatine is an analog of jasmonoyl isoleucine (JA-Ile). Ubiquitinated. Targeted for degradation by the SCF(COI1) E3 ubiquitin ligase-proteasome pathway during jasmonate signaling.

The protein localises to the nucleus. Its function is as follows. Repressor of jasmonate responses. This is Protein TIFY 10b from Oryza sativa subsp. japonica (Rice).